A 450-amino-acid chain; its full sequence is 3-phosphoshikimate 1-carboxyvinyltransferase (450 aa).

The segment at 1-26 is disordered; it reads MSGHGTPIPMTSRRASPLKGEAHVPG. 3-phosphoshikimate is bound by residues Lys28, Ser29, and Arg33. Lys28 contributes to the phosphoenolpyruvate binding site. Gly101 and Arg129 together coordinate phosphoenolpyruvate. 3-phosphoshikimate is bound by residues Ser174, Gln176, Asp327, and Lys354. Gln176 provides a ligand contact to phosphoenolpyruvate. The Proton acceptor role is filled by Asp327. Phosphoenolpyruvate contacts are provided by Arg358 and Arg403.

The protein belongs to the EPSP synthase family. As to quaternary structure, monomer.

The protein localises to the cytoplasm. It catalyses the reaction 3-phosphoshikimate + phosphoenolpyruvate = 5-O-(1-carboxyvinyl)-3-phosphoshikimate + phosphate. Its pathway is metabolic intermediate biosynthesis; chorismate biosynthesis; chorismate from D-erythrose 4-phosphate and phosphoenolpyruvate: step 6/7. Functionally, catalyzes the transfer of the enolpyruvyl moiety of phosphoenolpyruvate (PEP) to the 5-hydroxyl of shikimate-3-phosphate (S3P) to produce enolpyruvyl shikimate-3-phosphate and inorganic phosphate. The sequence is that of 3-phosphoshikimate 1-carboxyvinyltransferase from Ruegeria sp. (strain TM1040) (Silicibacter sp.).